Consider the following 122-residue polypeptide: Large ribosomal subunit protein uL14 (122 aa).

It belongs to the universal ribosomal protein uL14 family. In terms of assembly, part of the 50S ribosomal subunit. Forms a cluster with proteins L3 and L19. In the 70S ribosome, L14 and L19 interact and together make contacts with the 16S rRNA in bridges B5 and B8.

Functionally, binds to 23S rRNA. Forms part of two intersubunit bridges in the 70S ribosome. This is Large ribosomal subunit protein uL14 from Bartonella quintana (strain Toulouse) (Rochalimaea quintana).